Consider the following 292-residue polypeptide: Glycine--tRNA ligase alpha subunit (292 aa).

This sequence belongs to the class-II aminoacyl-tRNA synthetase family. As to quaternary structure, tetramer of two alpha and two beta subunits.

The protein localises to the cytoplasm. The enzyme catalyses tRNA(Gly) + glycine + ATP = glycyl-tRNA(Gly) + AMP + diphosphate. The sequence is that of Glycine--tRNA ligase alpha subunit from Buchnera aphidicola subsp. Schizaphis graminum (strain Sg).